The following is a 999-amino-acid chain: Disks large-associated protein 1 (999 aa).

3 disordered regions span residues 155 to 213 (HSLE…GYWS), 395 to 418 (MAEDDSGDSDGSPKPSPKMQARRA), and 918 to 989 (NWRP…DSIE). The segment covering 194–204 (RERCKSAEPKN) has biased composition (basic and acidic residues). Basic and acidic residues-rich tracts occupy residues 923 to 932 (DPPERKERRL) and 947 to 965 (LARDRSLESTEKQRQEARK). The segment covering 976 to 985 (VRQNSATESA) has biased composition (polar residues). A PDZ-binding motif is present at residues 997-999 (TRL).

Belongs to the SAPAP family.

The protein localises to the cell membrane. It localises to the postsynaptic density. It is found in the synapse. Its function is as follows. Part of the postsynaptic scaffold in neuronal cells. The polypeptide is Disks large-associated protein 1 (Danio rerio (Zebrafish)).